The following is a 521-amino-acid chain: MIKQALISVSDKSGIVDFAKSLSDLGVRILSTGGTAKLLADAGLSVTEVADYTGFPEMLDGRVKTLHPKVHGGILARRDLPEHMAALEKHDIPTIDLLVVNLYPFVQTVSKEECSLEDAIENIDIGGPTMLRSAAKNHRDVTVVVDPADYAVVLDEMRANSNAVSYKTNFRLATKVFAHTAQYDGAITNYLTSLTDELQHSSRNAYPATFNLAFNKAQDLRYGENPHQSAAFYRDLSVPAGALANYNQLQGKELSYNNIADSDAAWECVKTFDVPACVIVKHANPCGVAVGADANEAYAKAFQTDPTSAFGGIIAFNREVDEAAAQAVARQFVEVLIAPSFSAAARQVFAAKQNVRLLEIALGDGHNAFDLKRVGGGLLVQSLDSKNVQPRELRVVTKRHPTPKEMDDLLFAWRVAKYVKSNAIVFCGNGMTLGVGAGQMSRVDSARIASIKAQNAGLTLAGSAVASDAFFPFRDGLDVVVAAGATCVIQPGGSMRDEEVVSAADEHNIAMVLTGVRHFRH.

Positions 1–145 (MIKQALISVS…KNHRDVTVVV (145 aa)) constitute an MGS-like domain.

This sequence belongs to the PurH family.

It catalyses the reaction (6R)-10-formyltetrahydrofolate + 5-amino-1-(5-phospho-beta-D-ribosyl)imidazole-4-carboxamide = 5-formamido-1-(5-phospho-D-ribosyl)imidazole-4-carboxamide + (6S)-5,6,7,8-tetrahydrofolate. It carries out the reaction IMP + H2O = 5-formamido-1-(5-phospho-D-ribosyl)imidazole-4-carboxamide. Its pathway is purine metabolism; IMP biosynthesis via de novo pathway; 5-formamido-1-(5-phospho-D-ribosyl)imidazole-4-carboxamide from 5-amino-1-(5-phospho-D-ribosyl)imidazole-4-carboxamide (10-formyl THF route): step 1/1. It functions in the pathway purine metabolism; IMP biosynthesis via de novo pathway; IMP from 5-formamido-1-(5-phospho-D-ribosyl)imidazole-4-carboxamide: step 1/1. The protein is Bifunctional purine biosynthesis protein PurH of Paraburkholderia xenovorans (strain LB400).